Reading from the N-terminus, the 72-residue chain is Translation initiation factor IF-1 (72 aa).

Residues 1 to 72 (MAKEETIQMQ…SRARITFRAK (72 aa)) enclose the S1-like domain.

This sequence belongs to the IF-1 family. As to quaternary structure, component of the 30S ribosomal translation pre-initiation complex which assembles on the 30S ribosome in the order IF-2 and IF-3, IF-1 and N-formylmethionyl-tRNA(fMet); mRNA recruitment can occur at any time during PIC assembly.

The protein localises to the cytoplasm. One of the essential components for the initiation of protein synthesis. Stabilizes the binding of IF-2 and IF-3 on the 30S subunit to which N-formylmethionyl-tRNA(fMet) subsequently binds. Helps modulate mRNA selection, yielding the 30S pre-initiation complex (PIC). Upon addition of the 50S ribosomal subunit IF-1, IF-2 and IF-3 are released leaving the mature 70S translation initiation complex. This chain is Translation initiation factor IF-1, found in Nitrosospira multiformis (strain ATCC 25196 / NCIMB 11849 / C 71).